The following is a 414-amino-acid chain: Bifunctional protein GlmU (414 aa).

The interval 1–208 (MDAVILCAGS…SSKLYGIELN (208 aa)) is pyrophosphorylase. Residues 6–9 (LCAG), glutamine 74, and glycine 79 each bind UTP. Residues threonine 80, glycine 130, asparagine 142, and asparagine 162 each coordinate N-acetyl-alpha-D-glucosamine 1-phosphate. Residues 209–228 (GYWNDIGRPWDVLSANNYFL) form a linker region. The tract at residues 229-414 (KNIMPKISGN…KDELIIKKRN (186 aa)) is N-acetyltransferase. Residue histidine 312 is the Proton acceptor of the active site. Alanine 388 and lysine 405 together coordinate acetyl-CoA.

The protein in the N-terminal section; belongs to the N-acetylglucosamine-1-phosphate uridyltransferase family. In the C-terminal section; belongs to the transferase hexapeptide repeat family.

It carries out the reaction N-acetyl-alpha-D-glucosamine 1-phosphate + UTP + H(+) = UDP-N-acetyl-alpha-D-glucosamine + diphosphate. It catalyses the reaction alpha-D-glucosamine 1-phosphate + acetyl-CoA = N-acetyl-alpha-D-glucosamine 1-phosphate + CoA + H(+). It functions in the pathway nucleotide-sugar biosynthesis; UDP-N-acetyl-alpha-D-glucosamine biosynthesis; N-acetyl-alpha-D-glucosamine 1-phosphate from alpha-D-glucosamine 6-phosphate (route II): step 2/2. It participates in nucleotide-sugar biosynthesis; UDP-N-acetyl-alpha-D-glucosamine biosynthesis; UDP-N-acetyl-alpha-D-glucosamine from N-acetyl-alpha-D-glucosamine 1-phosphate: step 1/1. Functionally, catalyzes the last two sequential reactions in the de novo biosynthetic pathway for UDP-N-acetyl-glucosamine (UDP-GlcNAc). Responsible for the acetylation of GlcN-1-P to GlcNAc-1-P, and for the uridyl transfer from UTP to GlcNAc-1-P, to produce UDP-GlcNAc and pyrophosphate. This chain is Bifunctional protein GlmU, found in Methanococcus vannielii (strain ATCC 35089 / DSM 1224 / JCM 13029 / OCM 148 / SB).